Consider the following 301-residue polypeptide: Homoserine O-acetyltransferase (301 aa).

The active-site Acyl-thioester intermediate is the Cys-142. Residues Lys-163 and Ser-192 each coordinate substrate. His-235 acts as the Proton acceptor in catalysis. Residue Glu-237 is part of the active site. Arg-249 is a binding site for substrate.

The protein belongs to the MetA family.

Its subcellular location is the cytoplasm. The catalysed reaction is L-homoserine + acetyl-CoA = O-acetyl-L-homoserine + CoA. The protein operates within amino-acid biosynthesis; L-methionine biosynthesis via de novo pathway; O-acetyl-L-homoserine from L-homoserine: step 1/1. Transfers an acetyl group from acetyl-CoA to L-homoserine, forming acetyl-L-homoserine. This is Homoserine O-acetyltransferase from Bacillus thuringiensis subsp. konkukian (strain 97-27).